The chain runs to 175 residues: Protein LAZY 3 (175 aa).

The disordered stretch occupies residues 9–39 (RKLSGKKRVPTSDSSQEPSSPPLSKEVQGLP). Residues 44 to 50 (TFLAIGT) carry the IGT motif motif.

This sequence belongs to the LAZY family. Specifically expressed in roots. Expressed in root tips of young seedlings.

Functionally, involved in the regulation of root gravitropism. Functions redundantly with LAZY2 and LAZY4 in the control of root gravitropism. Functions redundantly with LAZY1, LAZY2 and LAZY4 to control plant architecture by coupling gravity sensing to the formation of auxin gradients. This is Protein LAZY 3 from Arabidopsis thaliana (Mouse-ear cress).